Consider the following 554-residue polypeptide: L-ascorbate oxidase homolog (554 aa).

The N-terminal stretch at 1–21 is a signal peptide; that stretch reads MGSGKVTFVALLLCLSVGVIA. 2 consecutive Plastocyanin-like domains span residues 22 to 143 and 196 to 296; these read EDPY…LNVH and SAKV…AIIR. Residues Asn-31, Asn-59, and Asn-108 are each glycosylated (N-linked (GlcNAc...) asparagine). A disulfide bond links Cys-101 and Cys-540. 3 N-linked (GlcNAc...) asparagine glycosylation sites follow: Asn-332, Asn-352, and Asn-423. The region spanning 411–521 is the Plastocyanin-like 3 domain; the sequence is DPSKLTIATN…LGEQLYFSVL (111 aa).

Belongs to the multicopper oxidase family. In terms of tissue distribution, pollen.

It localises to the secreted. It is found in the extracellular space. In terms of biological role, probable oxidoreductase that may be involved in pollen tube growth. The polypeptide is L-ascorbate oxidase homolog (Nicotiana tabacum (Common tobacco)).